The chain runs to 474 residues: Membrane-bound acylglycerophosphatidylinositol O-acyltransferase mboat7 (474 aa).

Over 1–5 (MSPNE) the chain is Cytoplasmic. A helical membrane pass occupies residues 6–22 (LTYLAILLGSAPLGFLF). Over 23–33 (KNGSPQVKQRG) the chain is Lumenal. Residues 34–57 (SAAVGVALTLITCHIHSLHSAITI) form a helical membrane-spanning segment. The Cytoplasmic portion of the chain corresponds to 58–73 (LGTWLIIKILPRSCHF). A helical membrane pass occupies residues 74-93 (PTLGWTFTYLLFFRTITYFD). At 94-193 (IPAPTPFTNA…IPSWKPLVSR (100 aa)) the chain is on the lumenal side. Residues 194–211 (LKPAPVFGVLFLIASQYF) traverse the membrane as a helical segment. Topologically, residues 212–230 (PLDYVKTDEFYEQAFLYRL) are cytoplasmic. The chain crosses the membrane as a helical span at residues 231 to 260 (FYMVPTFFIFRMRFYVAWIFAECGCISAAF). At 261–427 (GAYPVSAKSR…LTFTDTYRYW (167 aa)) the chain is on the lumenal side. N-linked (GlcNAc...) asparagine glycosylation occurs at N322. Residues 428–448 (QSIYFSVHVLAISLFLLGRVL) form a helical membrane-spanning segment. Residues 449 to 473 (ALKSPRRPRNTKEEKAEAKQENRLQ) lie on the Cytoplasmic side of the membrane.

The protein belongs to the membrane-bound acyltransferase family.

It is found in the endoplasmic reticulum membrane. The enzyme catalyses a 1-acyl-sn-glycero-3-phospho-(1D-myo-inositol) + (5Z,8Z,11Z,14Z)-eicosatetraenoyl-CoA = a 1-acyl-2-(5Z,8Z,11Z,14Z-eicosatetraenoyl)-sn-glycero-3-phospho-(1D-myo-inositol) + CoA. The catalysed reaction is (5Z,8Z,11Z,14Z)-eicosatetraenoyl-CoA + 1-hexadecanoyl-sn-glycero-3-phosphocholine = 1-hexadecanoyl-2-(5Z,8Z,11Z,14Z-eicosatetraenoyl)-sn-glycero-3-phosphocholine + CoA. It carries out the reaction a 1-acyl-sn-glycero-3-phospho-(1D-myo-inositol) + an acyl-CoA = a 1,2-diacyl-sn-glycero-3-phospho-(1D-myo-inositol) + CoA. It catalyses the reaction 1-octadecanoyl-sn-glycero-3-phospho-(1D-myo-inositol) + (5Z,8Z,11Z,14Z)-eicosatetraenoyl-CoA = 1-octadecanoyl-2-(5Z,8Z,11Z,14Z-eicosatetraenoyl)-sn-glycero-3-phospho-(1D-myo-inositol) + CoA. Its pathway is lipid metabolism; phospholipid metabolism. In terms of biological role, acyltransferase which catalyzes the transfer of an acyl group from an acyl-CoA to a lysophosphatidylinositol (1-acylglycerophosphatidylinositol or LPI) leading to the production of a phosphatidylinositol (1,2-diacyl-sn-glycero-3-phosphoinositol or PI) and participates in the reacylation step of the phospholipid remodeling pathway also known as the Lands cycle. Prefers arachidonoyl-CoA as the acyl donor, thus contributing to the regulation of free levels arachidonic acid in cell. The chain is Membrane-bound acylglycerophosphatidylinositol O-acyltransferase mboat7 (mboat7) from Xenopus laevis (African clawed frog).